We begin with the raw amino-acid sequence, 69 residues long: Neurotoxin Cex3 (69 aa).

A signal peptide is located at residue Ala1. Residues 2–67 (KDGYLVNKST…TYPLPNKSCG (66 aa)) form the LCN-type CS-alpha/beta domain. Disulfide bonds link Cys13–Cys66, Cys17–Cys42, Cys26–Cys47, and Cys30–Cys49. The residue at position 66 (Cys66) is a Cysteine amide. Positions 67 to 69 (GRK) are excised as a propeptide.

Belongs to the long (4 C-C) scorpion toxin superfamily. Sodium channel inhibitor family. Beta subfamily. Expressed by the venom gland.

The protein localises to the secreted. Functionally, beta toxins bind voltage-independently at site-4 of sodium channels (Nav) and shift the voltage of activation toward more negative potentials thereby affecting sodium channel activation and promoting spontaneous and repetitive firing. This Centruroides exilicauda (Bark scorpion) protein is Neurotoxin Cex3.